The primary structure comprises 458 residues: Exodeoxyribonuclease 7 large subunit (458 aa).

Belongs to the XseA family. Heterooligomer composed of large and small subunits.

The protein resides in the cytoplasm. The enzyme catalyses Exonucleolytic cleavage in either 5'- to 3'- or 3'- to 5'-direction to yield nucleoside 5'-phosphates.. In terms of biological role, bidirectionally degrades single-stranded DNA into large acid-insoluble oligonucleotides, which are then degraded further into small acid-soluble oligonucleotides. The polypeptide is Exodeoxyribonuclease 7 large subunit (Halalkalibacterium halodurans (strain ATCC BAA-125 / DSM 18197 / FERM 7344 / JCM 9153 / C-125) (Bacillus halodurans)).